An 841-amino-acid chain; its full sequence is Translation initiation factor IF-2 (841 aa).

Composition is skewed to basic and acidic residues over residues 1 to 12 (MSDNEIKNEAPK), 50 to 92 (EAAL…EATK), 114 to 170 (EQPK…REEA), 188 to 202 (READ…EANR), and 213 to 235 (KKGD…DVKG). Disordered stretches follow at residues 1-24 (MSDN…KTTV) and 50-246 (EAAL…GSAL). Residues 340-510 (TRAPVVTIMG…LLQSEVLELT (171 aa)) enclose the tr-type G domain. The segment at 349–356 (GHVDHGKT) is G1. 349-356 (GHVDHGKT) contacts GTP. A G2 region spans residues 374–378 (GITQH). The tract at residues 396–399 (DTPG) is G3. GTP contacts are provided by residues 396-400 (DTPGH) and 450-453 (NKID). The interval 450-453 (NKID) is G4. A G5 region spans residues 486–488 (SAK).

Belongs to the TRAFAC class translation factor GTPase superfamily. Classic translation factor GTPase family. IF-2 subfamily.

The protein resides in the cytoplasm. Its function is as follows. One of the essential components for the initiation of protein synthesis. Protects formylmethionyl-tRNA from spontaneous hydrolysis and promotes its binding to the 30S ribosomal subunits. Also involved in the hydrolysis of GTP during the formation of the 70S ribosomal complex. This is Translation initiation factor IF-2 from Actinobacillus pleuropneumoniae serotype 3 (strain JL03).